Reading from the N-terminus, the 190-residue chain is Peptidyl-prolyl cis-trans isomerase A (190 aa).

Residues 1-23 form the signal peptide; sequence MSKRILAAVVTVLSLTAFSPAFA. Positions 26 to 187 constitute a PPIase cyclophilin-type domain; sequence TSTHVLLTTS…KPIVIQSAKI (162 aa).

Belongs to the cyclophilin-type PPIase family.

It is found in the periplasm. The catalysed reaction is [protein]-peptidylproline (omega=180) = [protein]-peptidylproline (omega=0). In terms of biological role, PPIases accelerate the folding of proteins. It catalyzes the cis-trans isomerization of proline imidic peptide bonds in oligopeptides. This Dickeya dadantii (strain 3937) (Erwinia chrysanthemi (strain 3937)) protein is Peptidyl-prolyl cis-trans isomerase A (rotA).